Consider the following 93-residue polypeptide: Phosphoribosyl-ATP pyrophosphatase (93 aa).

This sequence belongs to the PRA-PH family.

The protein localises to the cytoplasm. It catalyses the reaction 1-(5-phospho-beta-D-ribosyl)-ATP + H2O = 1-(5-phospho-beta-D-ribosyl)-5'-AMP + diphosphate + H(+). Its pathway is amino-acid biosynthesis; L-histidine biosynthesis; L-histidine from 5-phospho-alpha-D-ribose 1-diphosphate: step 2/9. In Mycolicibacterium paratuberculosis (strain ATCC BAA-968 / K-10) (Mycobacterium paratuberculosis), this protein is Phosphoribosyl-ATP pyrophosphatase.